The sequence spans 120 residues: Cu-Zn superoxide dismutase-like protein OPG175 (120 aa).

Cysteine 52 and cysteine 102 are joined by a disulfide.

Belongs to the Cu-Zn superoxide dismutase family.

The protein resides in the virion. Its subcellular location is the host cytoplasm. In terms of biological role, superoxide dismutase-like protein with no enzymatic activity. This chain is Cu-Zn superoxide dismutase-like protein OPG175 (OPG175), found in Vaccinia virus (strain Tashkent) (VACV).